Reading from the N-terminus, the 513-residue chain is uncharacterized protein (513 aa).

The span at 1–16 (MPREHDSKYHRERDMR) shows a compositional bias: basic and acidic residues. The interval 1-21 (MPREHDSKYHRERDMRSGLQE) is disordered.

This is an uncharacterized protein from Sinorhizobium fredii (strain NBRC 101917 / NGR234).